The sequence spans 231 residues: MKITVLTLFEQVVWPYLNASIMAQAQKAKLVEFEVINWRQYCKDKHQTVDDMAYGGGGGMVLKAEPILKALKACRTPQSKVVLLSPEGQQFSQPMAQALTQTEHLILICGHYEGFDYRLYKHVDQIISLGDFVLSGGELVALSVIDATVRLIKGVINDQSLIHESFNNYLLDFPAYTRPYDLDGDKVPEILLSGDHKKIEAYRKEQQLLRTAQYRPDLYKQYLAKKDEKNK.

S-adenosyl-L-methionine is bound by residues glycine 110 and 129 to 134 (LGDFVL).

Belongs to the RNA methyltransferase TrmD family. As to quaternary structure, homodimer.

It localises to the cytoplasm. The enzyme catalyses guanosine(37) in tRNA + S-adenosyl-L-methionine = N(1)-methylguanosine(37) in tRNA + S-adenosyl-L-homocysteine + H(+). Functionally, specifically methylates guanosine-37 in various tRNAs. The sequence is that of tRNA (guanine-N(1)-)-methyltransferase (trmD) from Mycoplasma pneumoniae (strain ATCC 29342 / M129 / Subtype 1) (Mycoplasmoides pneumoniae).